The sequence spans 37 residues: Potassium channel toxin alpha-KTx 2.19 (37 aa).

Disulfide bonds link cysteine 7/cysteine 28, cysteine 13/cysteine 33, and cysteine 17/cysteine 35.

As to expression, expressed by the venom gland.

Its subcellular location is the secreted. Inhibitor of voltage-gated potassium channels. The sequence is that of Potassium channel toxin alpha-KTx 2.19 from Rhopalurus junceus (Caribbean blue scorpion).